We begin with the raw amino-acid sequence, 241 residues long: Caffeoyl-CoA O-methyltransferase (241 aa).

The residue at position 1 (M1) is a Blocked amino end (Met). K15 is a substrate binding site. S-adenosyl-L-methionine-binding positions include T57, E79, 81–82, S87, D105, and A134; that span reads GV. D157 contributes to the substrate binding site. D157 lines the a divalent metal cation pocket. D159 is a binding site for S-adenosyl-L-methionine. The a divalent metal cation site is built by D183 and N184. N188 provides a ligand contact to substrate.

It belongs to the class I-like SAM-binding methyltransferase superfamily. Cation-dependent O-methyltransferase family. CCoAMT subfamily. In terms of assembly, homodimer. A divalent metal cation is required as a cofactor. In terms of tissue distribution, roots and leaves.

It carries out the reaction (E)-caffeoyl-CoA + S-adenosyl-L-methionine = (E)-feruloyl-CoA + S-adenosyl-L-homocysteine + H(+). Its pathway is aromatic compound metabolism; phenylpropanoid biosynthesis. Functionally, methylates caffeoyl-CoA to feruloyl-CoA and 5-hydroxyferuloyl-CoA to sinapoyl-CoA. Plays a role in the synthesis of feruloylated polysaccharides. Involved in the reinforcement of the plant cell wall. Also involved in the responding to wounding or pathogen challenge by the increased formation of cell wall-bound ferulic acid polymers. The polypeptide is Caffeoyl-CoA O-methyltransferase (Petroselinum crispum (Parsley)).